Reading from the N-terminus, the 254-residue chain is Nickel import ATP-binding protein NikD (254 aa).

The 240-residue stretch at 2–241 (PQQIELRDIA…PKHAVTRSLV (240 aa)) folds into the ABC transporter domain. 36–43 (GGSGSGKS) serves as a coordination point for ATP.

Belongs to the ABC transporter superfamily. Nickel importer (TC 3.A.1.5.3) family. The complex is composed of two ATP-binding proteins (NikD and NikE), two transmembrane proteins (NikB and NikC) and a solute-binding protein (NikA).

Its subcellular location is the cell inner membrane. It catalyses the reaction Ni(2+)(out) + ATP + H2O = Ni(2+)(in) + ADP + phosphate + H(+). Part of the ABC transporter complex NikABCDE involved in nickel import. Responsible for energy coupling to the transport system. The polypeptide is Nickel import ATP-binding protein NikD (Shigella dysenteriae serotype 1 (strain Sd197)).